The sequence spans 605 residues: UvrABC system protein C (605 aa).

Positions 14 to 92 (QSCGVYKMIG…IKSLKPSYNI (79 aa)) constitute a GIY-YIG domain. The UVR domain maps to 202 to 237 (KEVQRQLFSTMEKCSREMNYELAAVYRDRLKFLQQI).

The protein belongs to the UvrC family. In terms of assembly, interacts with UvrB in an incision complex.

It localises to the cytoplasm. In terms of biological role, the UvrABC repair system catalyzes the recognition and processing of DNA lesions. UvrC both incises the 5' and 3' sides of the lesion. The N-terminal half is responsible for the 3' incision and the C-terminal half is responsible for the 5' incision. This is UvrABC system protein C from Wolbachia pipientis subsp. Culex pipiens (strain wPip).